The primary structure comprises 387 residues: Carbamoyl phosphate synthase small chain (387 aa).

The interval 1–189 is CPSase; sequence MIKSAILVLE…GLPEDKQEQD (189 aa). L-glutamine contacts are provided by Ser-47, Gly-241, and Gly-243. A Glutamine amidotransferase type-1 domain is found at 193–380; sequence HVVAYDFGAK…IELIEQYCQK (188 aa). Cys-269 acts as the Nucleophile in catalysis. Residues Leu-270, Gln-273, Asn-311, Gly-313, and Phe-314 each contribute to the L-glutamine site. Active-site residues include His-353 and Glu-355.

The protein belongs to the CarA family. In terms of assembly, composed of two chains; the small (or glutamine) chain promotes the hydrolysis of glutamine to ammonia, which is used by the large (or ammonia) chain to synthesize carbamoyl phosphate. Tetramer of heterodimers (alpha,beta)4.

It catalyses the reaction hydrogencarbonate + L-glutamine + 2 ATP + H2O = carbamoyl phosphate + L-glutamate + 2 ADP + phosphate + 2 H(+). The catalysed reaction is L-glutamine + H2O = L-glutamate + NH4(+). It participates in amino-acid biosynthesis; L-arginine biosynthesis; carbamoyl phosphate from bicarbonate: step 1/1. The protein operates within pyrimidine metabolism; UMP biosynthesis via de novo pathway; (S)-dihydroorotate from bicarbonate: step 1/3. Small subunit of the glutamine-dependent carbamoyl phosphate synthetase (CPSase). CPSase catalyzes the formation of carbamoyl phosphate from the ammonia moiety of glutamine, carbonate, and phosphate donated by ATP, constituting the first step of 2 biosynthetic pathways, one leading to arginine and/or urea and the other to pyrimidine nucleotides. The small subunit (glutamine amidotransferase) binds and cleaves glutamine to supply the large subunit with the substrate ammonia. This chain is Carbamoyl phosphate synthase small chain, found in Photorhabdus laumondii subsp. laumondii (strain DSM 15139 / CIP 105565 / TT01) (Photorhabdus luminescens subsp. laumondii).